The primary structure comprises 77 residues: Early E3 9.0 kDa glycoprotein (77 aa).

A glycan (N-linked (GlcNAc...) asparagine; by host) is linked at N7. A helical transmembrane segment spans residues 27–47; the sequence is ITILIVIGILILSVILYFIFC.

The protein belongs to the adenoviridae E3A-1 family.

The protein resides in the host nucleus membrane. This chain is Early E3 9.0 kDa glycoprotein, found in Human adenovirus B serotype 3 (HAdV-3).